The sequence spans 387 residues: Cystathionine gamma-lyase (387 aa).

The substrate site is built by arginine 53, tyrosine 105, and arginine 110. At lysine 202 the chain carries N6-(pyridoxal phosphate)lysine. Glutamate 329 is a substrate binding site.

It belongs to the trans-sulfuration enzymes family. Homotetramer. Interacts with CALM in a calcium-dependent manner. Pyridoxal 5'-phosphate is required as a cofactor.

It is found in the cytoplasm. It carries out the reaction L,L-cystathionine + H2O = 2-oxobutanoate + L-cysteine + NH4(+). The enzyme catalyses L-cysteine + H2O = hydrogen sulfide + pyruvate + NH4(+) + H(+). It catalyses the reaction L-homocysteine + H2O = 2-oxobutanoate + hydrogen sulfide + NH4(+) + H(+). The catalysed reaction is L-homoserine = 2-oxobutanoate + NH4(+). It participates in amino-acid biosynthesis; L-cysteine biosynthesis; L-cysteine from L-homocysteine and L-serine: step 2/2. Catalyzes the last step in the trans-sulfuration pathway from L-methionine to L-cysteine in a pyridoxal-5'-phosphate (PLP)-dependent manner, which consists on cleaving the L,L-cystathionine molecule into L-cysteine, ammonia and 2-oxobutanoate. Part of the L-cysteine derived from the trans-sulfuration pathway is utilized for biosynthesis of the ubiquitous antioxidant glutathione. Besides its role in the conversion of L-cystathionine into L-cysteine, it utilizes L-cysteine and L-homocysteine as substrates (at much lower rates than L,L-cystathionine) to produce the endogenous gaseous signaling molecule hydrogen sulfide (H2S). The protein is Cystathionine gamma-lyase (cysA) of Dictyostelium discoideum (Social amoeba).